Consider the following 237-residue polypeptide: Uracil-DNA glycosylase (237 aa).

D77 acts as the Proton acceptor in catalysis.

This sequence belongs to the uracil-DNA glycosylase (UDG) superfamily. UNG family.

Its subcellular location is the cytoplasm. It catalyses the reaction Hydrolyzes single-stranded DNA or mismatched double-stranded DNA and polynucleotides, releasing free uracil.. Its function is as follows. Excises uracil residues from the DNA which can arise as a result of misincorporation of dUMP residues by DNA polymerase or due to deamination of cytosine. This is Uracil-DNA glycosylase from Acinetobacter baumannii (strain SDF).